Consider the following 631-residue polypeptide: Mitochondrial Rho GTPase (631 aa).

The Cytoplasmic segment spans residues 1–605 (MRAGRVRPLR…TQADLKSSTF (605 aa)). One can recognise a Miro 1 domain in the interval 15 to 181 (KKDVRILLVG…FYYAQKAVLH (167 aa)). GTP contacts are provided by Arg-27, Gly-29, Lys-30, Thr-31, and Ser-32. Thr-31 serves as a coordination point for Mg(2+). Position 70 (Asp-70) interacts with Mg(2+). Residue Ser-72 participates in GTP binding. Lys-105 carries the N6-acetyllysine modification. Asn-131, Lys-132, Asp-134, Ala-162, and Lys-163 together coordinate GTP. Lys-166 participates in a covalent cross-link: Glycyl lysine isopeptide (Lys-Gly) (interchain with G-Cter in ubiquitin). An EF-hand 1 domain is found at 197–232 (ACIKALTRIFKISDQDNDGTLNDAELNFFQRICFNT). Asp-210, Asp-212, Asp-214, Thr-216, and Glu-221 together coordinate Ca(2+). Lys-248 is covalently cross-linked (Glycyl lysine isopeptide (Lys-Gly) (interchain with G-Cter in ubiquitin)). Positions 317 to 352 (HAYLFLQSTFDKHDLDRDCALSPDELKDLFQVFPYI) constitute an EF-hand 2 domain. 5 residues coordinate Ca(2+): Asp-330, Asp-332, Asp-334, Ala-336, and Glu-341. Residues 429–592 (RNVFRCNVIG…FVKLTTMAMY (164 aa)) form the Miro 2 domain. GTP-binding residues include Gly-441, Cys-442, Gly-443, Lys-444, Thr-445, Gly-446, Lys-460, Lys-541, Asp-543, Thr-571, and Cys-572. Residue Gly-441 coordinates Mg(2+). Lys-585 participates in a covalent cross-link: Glycyl lysine isopeptide (Lys-Gly) (interchain with G-Cter in ubiquitin). A helical; Anchor for type IV membrane protein transmembrane segment spans residues 606–628 (WLRASFGATVFAVVGFAMYRALL). Over 629–631 (KQR) the chain is Mitochondrial intermembrane.

This sequence belongs to the mitochondrial Rho GTPase family. In terms of assembly, homodimer. Interacts with the kinesin-binding proteins TRAK1/OIP106 and TRAK2/GRIF1, forming a link between mitochondria and the trafficking apparatus of the microtubules. Interacts with RAP1GDS1. Interacts with ARMCX1. Found in a complex with KIF5B, OGT, RHOT2 and TRAK1. Ubiquitinated by PRKN during mitophagy, leading to its degradation and enhancement of mitophagy. Deubiquitinated by USP30. Post-translationally, acetylation on Lys-105 decreases sensitivity of mitochondrial transport to elevated Ca(2+) levels, increases mitochondrial transport and promotes axon growth. Deacetylated by HDAC6 which blocks mitochondrial transport and mediates axon growth inhibition.

It is found in the mitochondrion outer membrane. It catalyses the reaction GTP + H2O = GDP + phosphate + H(+). The catalysed reaction is ATP + H2O = ADP + phosphate + H(+). It carries out the reaction UTP + H2O = UDP + phosphate + H(+). In terms of biological role, atypical mitochondrial nucleoside-triphosphatase (NTPase) involved in mitochondrial trafficking. Probably involved in control of anterograde transport of mitochondria and their subcellular distribution. Promotes mitochondrial fission during high calcium conditions. Can hydrolyze GTP, ATP and UTP. The chain is Mitochondrial Rho GTPase from Rattus norvegicus (Rat).